The primary structure comprises 54 residues: MPQLNPNPWFSIMLLTWFTFSLLIQPKLLSFTLTNNPANKITTTKPTPWTWPWT.

The chain crosses the membrane as a helical span at residues 8 to 24 (PWFSIMLLTWFTFSLLI).

The protein belongs to the ATPase protein 8 family. In terms of assembly, component of the ATP synthase complex composed at least of ATP5F1A/subunit alpha, ATP5F1B/subunit beta, ATP5MC1/subunit c (homooctomer), MT-ATP6/subunit a, MT-ATP8/subunit 8, ATP5ME/subunit e, ATP5MF/subunit f, ATP5MG/subunit g, ATP5MK/subunit k, ATP5MJ/subunit j, ATP5F1C/subunit gamma, ATP5F1D/subunit delta, ATP5F1E/subunit epsilon, ATP5PF/subunit F6, ATP5PB/subunit b, ATP5PD/subunit d, ATP5PO/subunit OSCP. ATP synthase complex consists of a soluble F(1) head domain (subunits alpha(3) and beta(3)) - the catalytic core - and a membrane F(0) domain - the membrane proton channel (subunits c, a, 8, e, f, g, k and j). These two domains are linked by a central stalk (subunits gamma, delta, and epsilon) rotating inside the F1 region and a stationary peripheral stalk (subunits F6, b, d, and OSCP).

The protein localises to the mitochondrion membrane. In terms of biological role, subunit 8, of the mitochondrial membrane ATP synthase complex (F(1)F(0) ATP synthase or Complex V) that produces ATP from ADP in the presence of a proton gradient across the membrane which is generated by electron transport complexes of the respiratory chain. ATP synthase complex consist of a soluble F(1) head domain - the catalytic core - and a membrane F(1) domain - the membrane proton channel. These two domains are linked by a central stalk rotating inside the F(1) region and a stationary peripheral stalk. During catalysis, ATP synthesis in the catalytic domain of F(1) is coupled via a rotary mechanism of the central stalk subunits to proton translocation. In vivo, can only synthesize ATP although its ATP hydrolase activity can be activated artificially in vitro. Part of the complex F(0) domain. In Gallus gallus (Chicken), this protein is ATP synthase F(0) complex subunit 8.